Reading from the N-terminus, the 83-residue chain is Insect toxin 2-13 (83 aa).

An N-terminal signal peptide occupies residues M1–A21. One can recognise an LCN-type CS-alpha/beta domain in the interval D22–G80. 4 disulfide bridges follow: C31–C79, C35–C56, C42–C61, and C46–C63. Glycine amide is present on G80.

Belongs to the long (4 C-C) scorpion toxin superfamily. Sodium channel inhibitor family. Beta subfamily. Expressed by the venom gland.

The protein resides in the secreted. Functionally, depressant insect toxins cause a transient contraction paralysis followed by a slow flaccid paralysis. They bind voltage-independently to sodium channels (Nav) and block action potentials, primarily by depolarizing the axonal membrane and suppressing the sodium current. The chain is Insect toxin 2-13 from Leiurus hebraeus (Hebrew deathstalker scorpion).